The following is a 1035-amino-acid chain: Valine--tRNA ligase (1035 aa).

The 'HIGH' region signature appears at 45–55; sequence PNVTGALHLGH. Residues 253 to 281 adopt a coiled-coil conformation; sequence EKLSDANEKEAVDLNKQIEALQKRREERL. ATP is bound at residue lysine 619. The stretch at 967–1035 forms a coiled coil; sequence DVEAELARLE…QDILKLQSKK (69 aa).

The protein belongs to the class-I aminoacyl-tRNA synthetase family. ValS type 1 subfamily. In terms of assembly, monomer.

Its subcellular location is the cytoplasm. The enzyme catalyses tRNA(Val) + L-valine + ATP = L-valyl-tRNA(Val) + AMP + diphosphate. Functionally, catalyzes the attachment of valine to tRNA(Val). As ValRS can inadvertently accommodate and process structurally similar amino acids such as threonine, to avoid such errors, it has a 'posttransfer' editing activity that hydrolyzes mischarged Thr-tRNA(Val) in a tRNA-dependent manner. This chain is Valine--tRNA ligase, found in Rhodopirellula baltica (strain DSM 10527 / NCIMB 13988 / SH1).